The following is a 66-amino-acid chain: Cold shock protein CspC (66 aa).

The region spanning 4 to 63 is the CSD domain; sequence GTVKWFNAEKGFGFIERENGDDVFVHFSAIQSDGFKSLDEGQKVSFDVEQGARGAQAANV.

It localises to the cytoplasm. The sequence is that of Cold shock protein CspC (cspC) from Bacillus subtilis (strain 168).